The primary structure comprises 263 residues: tRNA pseudouridine synthase A (263 aa).

The active-site Nucleophile is D51. Y106 provides a ligand contact to substrate.

The protein belongs to the tRNA pseudouridine synthase TruA family.

The enzyme catalyses uridine(38/39/40) in tRNA = pseudouridine(38/39/40) in tRNA. Its function is as follows. Formation of pseudouridine at positions 38, 39 and 40 in the anticodon stem and loop of transfer RNAs. The chain is tRNA pseudouridine synthase A from Pyrococcus abyssi (strain GE5 / Orsay).